Reading from the N-terminus, the 332-residue chain is Holliday junction branch migration complex subunit RuvB (332 aa).

The tract at residues 1–181 (MTRFLDSDAM…FGITGHMEYY (181 aa)) is large ATPase domain (RuvB-L). ATP contacts are provided by residues Leu-20, Arg-21, Gly-62, Lys-65, Thr-66, Thr-67, 128 to 130 (EDF), Arg-171, Tyr-181, and Arg-218. Thr-66 provides a ligand contact to Mg(2+). The segment at 182–252 (EENDLTEIIE…ITDKALTMLD (71 aa)) is small ATPAse domain (RuvB-S). The tract at residues 255 to 332 (HEGLDYVDQK…EHLGYQRFDK (78 aa)) is head domain (RuvB-H). DNA is bound by residues Arg-291, Arg-310, Arg-312, and Arg-315.

This sequence belongs to the RuvB family. In terms of assembly, homohexamer. Forms an RuvA(8)-RuvB(12)-Holliday junction (HJ) complex. HJ DNA is sandwiched between 2 RuvA tetramers; dsDNA enters through RuvA and exits via RuvB. An RuvB hexamer assembles on each DNA strand where it exits the tetramer. Each RuvB hexamer is contacted by two RuvA subunits (via domain III) on 2 adjacent RuvB subunits; this complex drives branch migration. In the full resolvosome a probable DNA-RuvA(4)-RuvB(12)-RuvC(2) complex forms which resolves the HJ.

Its subcellular location is the cytoplasm. The catalysed reaction is ATP + H2O = ADP + phosphate + H(+). The RuvA-RuvB-RuvC complex processes Holliday junction (HJ) DNA during genetic recombination and DNA repair, while the RuvA-RuvB complex plays an important role in the rescue of blocked DNA replication forks via replication fork reversal (RFR). RuvA specifically binds to HJ cruciform DNA, conferring on it an open structure. The RuvB hexamer acts as an ATP-dependent pump, pulling dsDNA into and through the RuvAB complex. RuvB forms 2 homohexamers on either side of HJ DNA bound by 1 or 2 RuvA tetramers; 4 subunits per hexamer contact DNA at a time. Coordinated motions by a converter formed by DNA-disengaged RuvB subunits stimulates ATP hydrolysis and nucleotide exchange. Immobilization of the converter enables RuvB to convert the ATP-contained energy into a lever motion, pulling 2 nucleotides of DNA out of the RuvA tetramer per ATP hydrolyzed, thus driving DNA branch migration. The RuvB motors rotate together with the DNA substrate, which together with the progressing nucleotide cycle form the mechanistic basis for DNA recombination by continuous HJ branch migration. Branch migration allows RuvC to scan DNA until it finds its consensus sequence, where it cleaves and resolves cruciform DNA. The sequence is that of Holliday junction branch migration complex subunit RuvB from Streptococcus agalactiae serotype Ia (strain ATCC 27591 / A909 / CDC SS700).